Reading from the N-terminus, the 225-residue chain is UPF0173 metal-dependent hydrolase PAE2160 (225 aa).

Belongs to the UPF0173 family.

This is UPF0173 metal-dependent hydrolase PAE2160 from Pyrobaculum aerophilum (strain ATCC 51768 / DSM 7523 / JCM 9630 / CIP 104966 / NBRC 100827 / IM2).